A 651-amino-acid polypeptide reads, in one-letter code: Probable potassium transport system protein Kup (651 aa).

The next 12 helical transmembrane spans lie at 41–61 (LVLGALGVVYGDIGTSPIYAF), 82–102 (VVSLIFWALTLVVTVKYVLFV), 130–150 (LILGVGICGAALFFGDAVITP), 163–183 (IVAPNLTPFVVPATVVILVTL), 194–214 (VAIVFGPIMALWFVALGASGL), 235–255 (FLTVSPAVAFVTVGAVFLAMT), 276–296 (WLWIVFPCLLLNYFGQAAFIL), 309–329 (MIPSFALWPMVLLATAATVIA), 366–386 (IYIPRVNLLLGLAVVILVLGF), 395–415 (AYGIAVTGNMLVTTVLLYIVM), 426–446 (ALPIILGFLVIDMLFFSANII), and 450–470 (EGGWASIGIATVLVLIMWTWV).

It belongs to the HAK/KUP transporter (TC 2.A.72) family.

The protein resides in the cell inner membrane. It catalyses the reaction K(+)(in) + H(+)(in) = K(+)(out) + H(+)(out). Its function is as follows. Transport of potassium into the cell. Likely operates as a K(+):H(+) symporter. In Brucella melitensis biotype 1 (strain ATCC 23456 / CCUG 17765 / NCTC 10094 / 16M), this protein is Probable potassium transport system protein Kup.